The chain runs to 291 residues: 4-hydroxy-tetrahydrodipicolinate synthase (291 aa).

Residue threonine 47 participates in pyruvate binding. The active-site Proton donor/acceptor is tyrosine 134. Lysine 162 serves as the catalytic Schiff-base intermediate with substrate. Residue isoleucine 205 coordinates pyruvate.

Belongs to the DapA family. As to quaternary structure, homotetramer; dimer of dimers.

The protein localises to the cytoplasm. The enzyme catalyses L-aspartate 4-semialdehyde + pyruvate = (2S,4S)-4-hydroxy-2,3,4,5-tetrahydrodipicolinate + H2O + H(+). Its pathway is amino-acid biosynthesis; L-lysine biosynthesis via DAP pathway; (S)-tetrahydrodipicolinate from L-aspartate: step 3/4. In terms of biological role, catalyzes the condensation of (S)-aspartate-beta-semialdehyde [(S)-ASA] and pyruvate to 4-hydroxy-tetrahydrodipicolinate (HTPA). The polypeptide is 4-hydroxy-tetrahydrodipicolinate synthase (Methanoculleus marisnigri (strain ATCC 35101 / DSM 1498 / JR1)).